The chain runs to 942 residues: Homeobox transcription factor phx1 (942 aa).

Composition is skewed to polar residues over residues 1 to 19 (MRSYSNPENGGQINDNINY), 61 to 73 (HLQGEQQNPTNPN), 99 to 116 (ADNNSFDNVNSSKLTNPS), and 122 to 135 (IVKSESEPANSKQN). 5 disordered regions span residues 1–54 (MRSY…MQLP), 61–80 (HLQGEQQNPTNPNYFPPEFD), 87–172 (KQEK…KKQR), 604–651 (WANQ…STST), and 892–922 (SSSGGVYASQPGASGYLSHDQSGSPFEDVYS). The segment covering 142–151 (SVEKAKENVA) has biased composition (basic and acidic residues). A compositionally biased stretch (low complexity) spans 153–164 (ESGTPESGGSTS). Residues 164–224 (SAPKSKKQRL…QNRRAKSKLI (61 aa)) constitute a DNA-binding region (homeobox). 2 stretches are compositionally biased toward polar residues: residues 604–614 (WANQLPRQPDS) and 630–641 (SHDTSSEYGNKS).

It localises to the nucleus. Its function is as follows. Trnascription factor that regulates the expression of the homocitrate synthase (HCS) lys4. The sequence is that of Homeobox transcription factor phx1 (phx1) from Schizosaccharomyces pombe (strain 972 / ATCC 24843) (Fission yeast).